The sequence spans 311 residues: MAIERKFVNDGFVKASMDEYFAEQLNRAGYGGMELNRTPMGTQIVIYSEKPGMVIGKAGKVIRKLTRDVAARYNLENPQIDAQEVKKPELNAQMMASRLAASIERGWYFRKAGHNTLRAVMNAGALGCEVVISGKLTGARSRVEKFVDGYIKHSGNPVDEVVDEGFAVAIKKLGTLGCKVRIIQPGVVLPDSYTTTEPSEPVTEPVEKPAEKPAAKPAEKPVEAPKKESAAKPKTPAVAPEKPVETAEVAEPEEAEEEPQAEVAEDLEEAEVIQVEGSEELRRQVNGVWQHKHEGYDYWHPMARVHKEAKE.

In terms of domain architecture, KH type-2 spans 17 to 86; the sequence is MDEYFAEQLN…NPQIDAQEVK (70 aa). A disordered region spans residues 190–267; the sequence is PDSYTTTEPS…EPQAEVAEDL (78 aa). Over residues 194 to 204 the composition is skewed to low complexity; that stretch reads TTTEPSEPVTE. Over residues 205–231 the composition is skewed to basic and acidic residues; the sequence is PVEKPAEKPAAKPAEKPVEAPKKESAA. Residues 232-247 show a composition bias toward low complexity; that stretch reads KPKTPAVAPEKPVETA. Over residues 248–267 the composition is skewed to acidic residues; sequence EVAEPEEAEEEPQAEVAEDL.

It belongs to the universal ribosomal protein uS3 family. As to quaternary structure, part of the 30S ribosomal subunit.

Binds the lower part of the 30S subunit head. In Methanosarcina barkeri (strain Fusaro / DSM 804), this protein is Small ribosomal subunit protein uS3.